The sequence spans 261 residues: Follistatin-related protein 3 (261 aa).

The first 26 residues, 1 to 26 (MRPRAPGPLWPLPWGALAWAVGFVGS), serve as a signal peptide directing secretion. The 72-residue stretch at 36 to 107 (GVCWLQQGRE…SCEGVECGPG (72 aa)) folds into the TB domain. Cystine bridges form between Cys-38–Cys-61, Cys-48–Cys-92, Cys-62–Cys-95, Cys-99–Cys-110, Cys-104–Cys-119, Cys-121–Cys-153, Cys-125–Cys-146, and Cys-135–Cys-167. Asn-73 carries N-linked (GlcNAc...) asparagine glycosylation. A Follistatin-like 1 domain is found at 99-119 (CEGVECGPGKACRMLGGRPRC). Kazal-like domains lie at 113-169 (LGGR…RCRK) and 189-245 (SAHC…SCAG). Residues 170–193 (SCAHVVCLRPQSCVVDQTGSAHCV) enclose the Follistatin-like 2 domain. 3 disulfides stabilise this stretch: Cys-195–Cys-229, Cys-200–Cys-222, and Cys-211–Cys-243. A glycan (N-linked (GlcNAc...) asparagine) is linked at Asn-215. The segment at 242–261 (SCAGTPEPLDPESEEEENFV) is disordered. The segment covering 250-261 (LDPESEEEENFV) has biased composition (acidic residues).

Interacts with INHBA and INHBB. Interacts with FN1. Interacts with ADAM12. Interacts with MLLT10; the interaction enhances MLLT10 in vitro transcriptional activity and self-association. Interacts with MSTN.

It is found in the secreted. The protein resides in the nucleus. In terms of biological role, the secreted form is a binding and antagonizing protein for members of the TGF-beta family, such as activin, BMP2 and MSTN. Inhibits activin A-, activin B-, BMP2- and MSDT-induced cellular signaling; more effective on activin A than on activin B. Involved in bone formation; inhibits osteoclast differentiation. Involved in hematopoiesis; involved in differentiation of hemopoietic progenitor cells, increases hematopoietic cell adhesion to fibronectin and seems to contribute to the adhesion of hematopoietic precursor cells to the bone marrow stroma. The nuclear form is probably involved in transcriptional regulation via interaction with MLLT10. This Bos taurus (Bovine) protein is Follistatin-related protein 3 (FSTL3).